Reading from the N-terminus, the 318-residue chain is MREEVERKIKEVLGVKEETLKYEGVFRRRKRKGAKEYEYLEAKFYDIEEKKIVNVHVPVKKENLVLELDRHWKESKKREKELEKRLKEIISEYKNPDLIREILERLLEEGIRREAKDYAYEKYKKEALELFERFKPYLIKLRRERLKRINLLQALYLLANVKEMFQEKEEELEKVMERAVKTILFRDQNQKLQSPLGVLKNDFFLPKETPYDFLLSRFLQAELEPVLEKLLKAEIEKEETQEAMGEIAEFLTELSEEAKSRVLKVFPSFSQFSKVLYREWKKSGQSLKDFLVDWKSFLEFKGKEAEKEVLNVLSKLNL.

This sequence to A.aeolicus AA07 and AA34.

This is an uncharacterized protein from Aquifex aeolicus (strain VF5).